The chain runs to 317 residues: Cell division protein FtsQ (317 aa).

The Cytoplasmic portion of the chain corresponds to 1 to 63 (MDGGGRFVFA…RIHIPAHTGT (63 aa)). The helical transmembrane segment at 64–82 (ISAVAFYAMIGLYGMSLGG) threads the bilayer. Topologically, residues 83-317 (HTNIVTQTTT…KALKKAEKNT (235 aa)) are periplasmic. The POTRA domain maps to 97 to 165 (FAVEDVKVSG…KTVEVRLKER (69 aa)).

It belongs to the FtsQ/DivIB family. FtsQ subfamily.

It localises to the cell inner membrane. Essential cell division protein. This is Cell division protein FtsQ from Agrobacterium fabrum (strain C58 / ATCC 33970) (Agrobacterium tumefaciens (strain C58)).